Consider the following 130-residue polypeptide: Small ribosomal subunit protein uS11 (130 aa).

Belongs to the universal ribosomal protein uS11 family. Part of the 30S ribosomal subunit. Interacts with proteins S7 and S18. Binds to IF-3.

Located on the platform of the 30S subunit, it bridges several disparate RNA helices of the 16S rRNA. Forms part of the Shine-Dalgarno cleft in the 70S ribosome. This Thermoanaerobacter sp. (strain X514) protein is Small ribosomal subunit protein uS11.